The chain runs to 194 residues: Phosphoheptose isomerase (194 aa).

The region spanning 37-194 (ISNSFKQGGK…LIEFEMAKQA (158 aa)) is the SIS domain. Residue 52 to 54 (NGG) participates in substrate binding. The Zn(2+) site is built by H61 and E65. Substrate is bound by residues E65, 93 to 94 (ND), 119 to 121 (STS), S124, and Q172. Positions 172 and 180 each coordinate Zn(2+).

The protein belongs to the SIS family. GmhA subfamily. In terms of assembly, homotetramer. It depends on Zn(2+) as a cofactor.

The protein localises to the cytoplasm. It carries out the reaction 2 D-sedoheptulose 7-phosphate = D-glycero-alpha-D-manno-heptose 7-phosphate + D-glycero-beta-D-manno-heptose 7-phosphate. It functions in the pathway carbohydrate biosynthesis; D-glycero-D-manno-heptose 7-phosphate biosynthesis; D-glycero-alpha-D-manno-heptose 7-phosphate and D-glycero-beta-D-manno-heptose 7-phosphate from sedoheptulose 7-phosphate: step 1/1. Its function is as follows. Catalyzes the isomerization of sedoheptulose 7-phosphate in D-glycero-D-manno-heptose 7-phosphate. The protein is Phosphoheptose isomerase of Haemophilus influenzae (strain PittEE).